A 2465-amino-acid polypeptide reads, in one-letter code: Serine/threonine-protein kinase TOR (2465 aa).

11 HEAT repeats span residues 184–221 (VHVP…VIEK), 271–308 (SRYR…FLRD), 348–389 (AELV…AMGP), 549–587 (RLVE…FDDF), 588–625 (LAQA…KNPA), 717–755 (QYLP…STGY), 761–799 (NEYP…LDPH), 888–926 (PYLP…IVRQ), 981–1018 (MYIL…VFGG), 1022–1059 (EHMH…TVQV), and 1061–1098 (THVS…ALGE). The disordered stretch occupies residues 1158–1191 (DFGGVPSEEADETQRQPRSHQVNDVRLRSAGEAS). Positions 1297-1877 (LLGALAEKCR…MYPLLVACKS (581 aa)) constitute an FAT domain. Residues 2051-2369 (FVPQLIVITS…PPRGAREREL (319 aa)) form the PI3K/PI4K catalytic domain. Residues 2057 to 2063 (VITSKQR) are G-loop. Positions 2230-2238 (GLGDRHPSN) are catalytic loop. Residues 2250–2275 (HIDFGDCFEASMNREKFPEKVPFRLT) are activation loop. The disordered stretch occupies residues 2401 to 2431 (RDFSSGSSLSGAGSSTQHGNEHLASGDTREV). Over residues 2404 to 2415 (SSGSSLSGAGSS) the composition is skewed to low complexity. The FATC domain occupies 2433 to 2465 (PGLSVKVQVQRLILQATSHENLCQNYVGWCPFW).

The protein belongs to the PI3/PI4-kinase family. In terms of assembly, the target of rapamycin complex 1 (TORC1) is composed of at least RAPTOR, LST8 and TOR.

It carries out the reaction L-seryl-[protein] + ATP = O-phospho-L-seryl-[protein] + ADP + H(+). The enzyme catalyses L-threonyl-[protein] + ATP = O-phospho-L-threonyl-[protein] + ADP + H(+). Its activity is regulated as follows. Insensitive to inhibition by rapamycin. Functionally, component of TORC1 complex, which is an essential cell growth regulator that controls plant development. Acts through the phosphorylation of downstream effectors that are recruited by the binding partner RAPTOR. Acts by activating transcription, protein synthesis and ribosome biogenesis, and inhibiting mRNA degradation and autophagy. The polypeptide is Serine/threonine-protein kinase TOR (Oryza sativa subsp. japonica (Rice)).